The chain runs to 141 residues: Large ribosomal subunit protein uL11 (141 aa).

This sequence belongs to the universal ribosomal protein uL11 family. Part of the ribosomal stalk of the 50S ribosomal subunit. Interacts with L10 and the large rRNA to form the base of the stalk. L10 forms an elongated spine to which L12 dimers bind in a sequential fashion forming a multimeric L10(L12)X complex. Post-translationally, one or more lysine residues are methylated.

In terms of biological role, forms part of the ribosomal stalk which helps the ribosome interact with GTP-bound translation factors. The chain is Large ribosomal subunit protein uL11 from Campylobacter lari (strain RM2100 / D67 / ATCC BAA-1060).